We begin with the raw amino-acid sequence, 109 residues long: ATPase inhibitor, mitochondrial (109 aa).

A mitochondrion-targeting transit peptide spans 1 to 25 (MAATALAARTRQAVWSVWAMQGRGF). Positions 26–52 (GSESGDNVRSSAGAVRDAGGAFGKREQ) are disordered. The interval 26-52 (GSESGDNVRSSAGAVRDAGGAFGKREQ) is N-terminal inhibitory region. Positions 69–109 (ALKKHHENEISHHAKEIERLQKEIERHKQSIKKLKQSEDDD) form a coiled coil. Residues 74 to 106 (HENEISHHAKEIERLQKEIERHKQSIKKLKQSE) are antiparallel alpha-helical coiled coil region. Residue Lys103 is modified to N6-succinyllysine.

It belongs to the ATPase inhibitor family. As to quaternary structure, homodimer; represents the active form and is present at a pH value below 6.5. Homotetramer; represents the inactive form and is present at a pH value above 7.0.

It is found in the mitochondrion. Endogenous F(1)F(o)-ATPase inhibitor limiting ATP depletion when the mitochondrial membrane potential falls below a threshold and the F(1)F(o)-ATP synthase starts hydrolyzing ATP to pump protons out of the mitochondrial matrix. Required to avoid the consumption of cellular ATP when the F(1)F(o)-ATP synthase enzyme acts as an ATP hydrolase. Indirectly acts as a regulator of heme synthesis in erythroid tissues: regulates heme synthesis by modulating the mitochondrial pH and redox potential, allowing FECH to efficiently catalyze the incorporation of iron into protoporphyrin IX to produce heme. This is ATPase inhibitor, mitochondrial from Bos taurus (Bovine).